The sequence spans 267 residues: Chlorophyll a-b binding protein 3B, chloroplastic (267 aa).

The N-terminal 34 residues, 1–34 (MAASTMALSSSTFAGKAVKLSPSSSEISGNGRIT), are a transit peptide targeting the chloroplast. The segment at 19–52 (KLSPSSSEISGNGRITMRKTAAKPKPASSGSPWX) is disordered. The helical transmembrane segment at 153-173 (LVHAQSILAIWACQVVLMGAV) threads the bilayer. 6 residues coordinate chlorophyll b: Val-154, Ser-158, Gln-166, Glu-174, Arg-177, and Leu-183. Chlorophyll a-binding residues include Lys-214, Glu-215, Asn-218, Arg-220, Gln-232, His-247, and Ala-256. The helical transmembrane segment at 221–241 (LAMFSMFGFFVQAIVTGKGPL) threads the bilayer. Residue Phe-263 participates in chlorophyll b binding.

It belongs to the light-harvesting chlorophyll a/b-binding (LHC) protein family. In terms of assembly, the LHC complex consists of chlorophyll a-b binding proteins. The cofactor is Binds at least 14 chlorophylls (8 Chl-a and 6 Chl-b) and carotenoids such as lutein and neoxanthin.. Post-translationally, photoregulated by reversible phosphorylation of its threonine residues.

It is found in the plastid. The protein localises to the chloroplast thylakoid membrane. Functionally, the light-harvesting complex (LHC) functions as a light receptor, it captures and delivers excitation energy to photosystems with which it is closely associated. This is Chlorophyll a-b binding protein 3B, chloroplastic (CAB3B) from Solanum lycopersicum (Tomato).